The following is a 620-amino-acid chain: MSSGVQGGPAANANAYQTHPLRDAASALGTLSPQAYVDVVSAAQRNFLERMSQLASEQCDAQPAAHDARLDDRPALRAPQERDAPPLGASDTGSRASGAAKLTELLGVLMSVISASSLDELKQRSDIWNQMSKAAQDNLSRLSDAFQRATDEAKAAADAAEQAAAAAKQAGADAKAADAAVDAAQKRYDDAVKQGLPDDRLQSLKAALEQARQQAGDAHGRADALQADATKKLDAASALATQARACEQQVDDAVNQATQQYGASASLRTPQSPRLSGAAELTAVLGKLQELISSGNVKELESKQKLFTEMQAKREAELQKKSDEYQAQVKKAEEMQKTMGCIGKIVGWVITAVSFAAAAFTGGASLALAAVGLALAVGDEISRATTGVSFMDKLMQPVMDAILKPLMEMISSLITKALVACGVDQQKAELAGAILGAVVTGVALVAAAFVGASAVKAVASKVIDAMAGQLTKLMDSAIGKMLVQLIEKFSEKSGLQALGSRTATAMTRMRRAIGVEAKEDGMLLANRFEKAGTVMNVGNQVSQAAGGIVVGVERAKAMGLLADVKEAMYDIKLLGDLLKQAVDAFAEHNRVLAQLMQQMSDAGEMQTSTGKLILRNARAV.

A disordered region spans residues 58–95 (QCDAQPAAHDARLDDRPALRAPQERDAPPLGASDTGSR). Residues 66-84 (HDARLDDRPALRAPQERDA) show a composition bias toward basic and acidic residues. Residues 309–339 (EMQAKREAELQKKSDEYQAQVKKAEEMQKTM) adopt a coiled-coil conformation. A run of 3 helical transmembrane segments spans residues 355 to 375 (FAAAAFTGGASLALAAVGLAL), 401 to 421 (AILKPLMEMISSLITKALVAC), and 430 to 450 (LAGAILGAVVTGVALVAAAFV).

Belongs to the SctE/SipB/YopB family.

It localises to the secreted. It is found in the host membrane. Its function is as follows. Plays a role in the bacterium-induced formation of multinucleated giant cell (MNGC), which is formed after host cell fusion, as well as in the intercellular spreading of bacteria and in the induction of apoptosis in macrophages. May act in concert with other effector proteins to induce fusion of host cell membranes. In Burkholderia mallei (strain NCTC 10247), this protein is Translocator protein BipB (bipB).